A 317-amino-acid chain; its full sequence is HTH-type transcriptional regulator CfxR (317 aa).

Positions 8-65 (LTLRQLQIFVTVARHASFVRAAEELHLTQPAVSMQVKQLESVVGMALFERVKGQLTLT) constitute an HTH lysR-type domain. Positions 25 to 44 (FVRAAEELHLTQPAVSMQVK) form a DNA-binding region, H-T-H motif.

It belongs to the LysR transcriptional regulatory family.

In terms of biological role, trans-acting transcriptional regulator of RuBisCO genes (cfxLS) expression. This is HTH-type transcriptional regulator CfxR (cfxR) from Cupriavidus necator (strain ATCC 17699 / DSM 428 / KCTC 22496 / NCIMB 10442 / H16 / Stanier 337) (Ralstonia eutropha).